The chain runs to 218 residues: Octanoyltransferase (218 aa).

Residues 32–218 enclose the BPL/LPL catalytic domain; sequence GDAPEAVWLL…LRTFSRSFPD (187 aa). Substrate contacts are provided by residues 71–78, 151–153, and 164–166; these read RGGQYTYH, AIG, and GLS. Cysteine 182 (acyl-thioester intermediate) is an active-site residue.

This sequence belongs to the LipB family.

The protein localises to the cytoplasm. The enzyme catalyses octanoyl-[ACP] + L-lysyl-[protein] = N(6)-octanoyl-L-lysyl-[protein] + holo-[ACP] + H(+). Its pathway is protein modification; protein lipoylation via endogenous pathway; protein N(6)-(lipoyl)lysine from octanoyl-[acyl-carrier-protein]: step 1/2. In terms of biological role, catalyzes the transfer of endogenously produced octanoic acid from octanoyl-acyl-carrier-protein onto the lipoyl domains of lipoate-dependent enzymes. Lipoyl-ACP can also act as a substrate although octanoyl-ACP is likely to be the physiological substrate. The protein is Octanoyltransferase of Cereibacter sphaeroides (strain ATCC 17025 / ATH 2.4.3) (Rhodobacter sphaeroides).